The following is a 435-amino-acid chain: NADH-quinone oxidoreductase subunit D (435 aa).

The protein belongs to the complex I 49 kDa subunit family. In terms of assembly, NDH-1 is composed of 14 different subunits. Subunits NuoB, C, D, E, F, and G constitute the peripheral sector of the complex.

Its subcellular location is the cell inner membrane. It catalyses the reaction a quinone + NADH + 5 H(+)(in) = a quinol + NAD(+) + 4 H(+)(out). NDH-1 shuttles electrons from NADH, via FMN and iron-sulfur (Fe-S) centers, to quinones in the respiratory chain. The immediate electron acceptor for the enzyme in this species is believed to be ubiquinone. Couples the redox reaction to proton translocation (for every two electrons transferred, four hydrogen ions are translocated across the cytoplasmic membrane), and thus conserves the redox energy in a proton gradient. The chain is NADH-quinone oxidoreductase subunit D from Xanthomonas euvesicatoria pv. vesicatoria (strain 85-10) (Xanthomonas campestris pv. vesicatoria).